The chain runs to 103 residues: MAETPTVKLKGKDRIVVWPAYFDADRSRSEGRKVPKRLAVRNPRLTELRHIAEKLGLNPKVQRDKRYPKRWWDDKGRLIVDKVESKRKTLLMIAEKLKERRES.

It belongs to the SRP19 family. As to quaternary structure, part of the signal recognition particle protein translocation system, which is composed of SRP and FtsY. Archaeal SRP consists of a 7S RNA molecule of 300 nucleotides and two protein subunits: SRP54 and SRP19.

The protein resides in the cytoplasm. Involved in targeting and insertion of nascent membrane proteins into the cytoplasmic membrane. Binds directly to 7S RNA and mediates binding of the 54 kDa subunit of the SRP. In Methanopyrus kandleri (strain AV19 / DSM 6324 / JCM 9639 / NBRC 100938), this protein is Signal recognition particle 19 kDa protein.